Reading from the N-terminus, the 189-residue chain is dTTP/UTP pyrophosphatase (189 aa).

Residue aspartate 70 is the Proton acceptor of the active site.

It belongs to the Maf family. YhdE subfamily. A divalent metal cation serves as cofactor.

The protein localises to the cytoplasm. It carries out the reaction dTTP + H2O = dTMP + diphosphate + H(+). It catalyses the reaction UTP + H2O = UMP + diphosphate + H(+). In terms of biological role, nucleoside triphosphate pyrophosphatase that hydrolyzes dTTP and UTP. May have a dual role in cell division arrest and in preventing the incorporation of modified nucleotides into cellular nucleic acids. The sequence is that of dTTP/UTP pyrophosphatase from Akkermansia muciniphila (strain ATCC BAA-835 / DSM 22959 / JCM 33894 / BCRC 81048 / CCUG 64013 / CIP 107961 / Muc).